Reading from the N-terminus, the 1292-residue chain is Zinc finger CCCH domain-containing protein 44 (1292 aa).

Over residues 1-10 (MENQQKQLQQ) the composition is skewed to polar residues. 2 disordered regions span residues 1 to 24 (MENQ…REES) and 72 to 107 (IDEA…KKED). The PHD-type zinc finger occupies 110-176 (EDVCFICFDG…SYMCYTCTFS (67 aa)). Disordered regions lie at residues 256–313 (PWKE…LKKA) and 401–426 (KGAK…VHDP). In terms of domain architecture, SWIB/MDM2 spans 313 to 396 (APGDTSWATK…LKLLESHVLI (84 aa)). The span at 404-414 (KTTNGETTHAV) shows a compositional bias: polar residues. The region spanning 453–586 (AIDVHNINLI…TAATLQAMRI (134 aa)) is the Plus3 domain. Disordered stretches follow at residues 624-731 (PEVH…TQGP), 777-832 (TTLP…SNDP), 876-915 (DVRE…INGS), and 1170-1245 (TTVE…HNNR). Residues 661-675 (QNKGVNLNNVGNNVQ) are compositionally biased toward low complexity. Basic and acidic residues predominate over residues 689–698 (VHADKDDCSK). Residues 699-708 (VHNNSSNIQE) are compositionally biased toward polar residues. One can recognise a GYF domain in the interval 716-770 (SEIWHYRDPTGKTQGPFSMVQLRRWKSSGHFPPYLRIWRAHENQDESVLLTDALA). Positions 813–829 (VNTSATSSSSSTVTAHS) are enriched in low complexity. Polar residues-rich tracts occupy residues 882 to 899 (GTDQ…NTTK) and 906 to 915 (NGGSVSINGS). Composition is skewed to low complexity over residues 1188–1206 (SSEP…SARG) and 1231–1244 (NNGH…SHNN). A C3H1-type zinc finger spans residues 1267–1292 (PKGLKICKFYESGYCKRGASCSFWHP).

This Arabidopsis thaliana (Mouse-ear cress) protein is Zinc finger CCCH domain-containing protein 44.